The primary structure comprises 388 residues: Cobalt-precorrin-5B C(1)-methyltransferase (388 aa).

Belongs to the CbiD family.

The catalysed reaction is Co-precorrin-5B + S-adenosyl-L-methionine = Co-precorrin-6A + S-adenosyl-L-homocysteine. Its pathway is cofactor biosynthesis; adenosylcobalamin biosynthesis; cob(II)yrinate a,c-diamide from sirohydrochlorin (anaerobic route): step 6/10. In terms of biological role, catalyzes the methylation of C-1 in cobalt-precorrin-5B to form cobalt-precorrin-6A. This chain is Cobalt-precorrin-5B C(1)-methyltransferase, found in Rubrobacter xylanophilus (strain DSM 9941 / JCM 11954 / NBRC 16129 / PRD-1).